We begin with the raw amino-acid sequence, 299 residues long: UTP--glucose-1-phosphate uridylyltransferase 1 (299 aa).

Belongs to the UDPGP type 2 family.

It carries out the reaction alpha-D-glucose 1-phosphate + UTP + H(+) = UDP-alpha-D-glucose + diphosphate. The protein operates within carbohydrate metabolism; nucleotide-sugar metabolism. The sequence is that of UTP--glucose-1-phosphate uridylyltransferase 1 (hasC1) from Streptococcus pyogenes serotype M6 (strain ATCC BAA-946 / MGAS10394).